Here is a 253-residue protein sequence, read N- to C-terminus: Large ribosomal subunit protein uL4 (253 aa).

Residues 62-107 (WGSGRGVSHVPRLKNSSRAARVPHAKGGRRAHPPKPEADRSEKVNT) are disordered. Basic residues predominate over residues 82–94 (RVPHAKGGRRAHP). The span at 95–107 (PKPEADRSEKVNT) shows a compositional bias: basic and acidic residues.

It belongs to the universal ribosomal protein uL4 family. Part of the 50S ribosomal subunit.

Functionally, one of the primary rRNA binding proteins, this protein initially binds near the 5'-end of the 23S rRNA. It is important during the early stages of 50S assembly. It makes multiple contacts with different domains of the 23S rRNA in the assembled 50S subunit and ribosome. Its function is as follows. Forms part of the polypeptide exit tunnel. The sequence is that of Large ribosomal subunit protein uL4 from Methanosarcina mazei (strain ATCC BAA-159 / DSM 3647 / Goe1 / Go1 / JCM 11833 / OCM 88) (Methanosarcina frisia).